Consider the following 343-residue polypeptide: GDSL esterase/lipase EXL6 (343 aa).

An N-terminal signal peptide occupies residues 1–21 (MFRGKIFVLSLFSIYVLSSAA). Asn24 carries an N-linked (GlcNAc...) asparagine glycan. Ser36 serves as the catalytic Nucleophile. Active-site residues include Asp318 and His321.

The protein belongs to the 'GDSL' lipolytic enzyme family. In terms of tissue distribution, flower buds and pollen.

The protein localises to the secreted. Its subcellular location is the extracellular space. The protein resides in the extracellular matrix. It localises to the pollen coat. In terms of biological role, required for the formation of pollen coats and male fertility. The polypeptide is GDSL esterase/lipase EXL6 (EXL6) (Arabidopsis thaliana (Mouse-ear cress)).